Here is a 100-residue protein sequence, read N- to C-terminus: MELNPREKDKLLLFTAALLAERRKARGVKLNYPEAIALISAEVMEGARDGKTVAELMEAGRQVLRVEDVMDGIADMIHEVQVEATFPDGTKLVTVHNPIV.

Belongs to the urease gamma subunit family. As to quaternary structure, heterotrimer of UreA (gamma), UreB (beta) and UreC (alpha) subunits. Three heterotrimers associate to form the active enzyme.

It localises to the cytoplasm. It carries out the reaction urea + 2 H2O + H(+) = hydrogencarbonate + 2 NH4(+). It participates in nitrogen metabolism; urea degradation; CO(2) and NH(3) from urea (urease route): step 1/1. The chain is Urease subunit gamma from Saccharophagus degradans (strain 2-40 / ATCC 43961 / DSM 17024).